A 388-amino-acid polypeptide reads, in one-letter code: Chorismate synthase (388 aa).

Positions 39 and 45 each coordinate NADP(+). FMN contacts are provided by residues Arg-132–Ser-134, Asn-251–Ala-252, Gly-296, Lys-311–Thr-315, and Arg-337.

The protein belongs to the chorismate synthase family. Homotetramer. Requires FMNH2 as cofactor.

The enzyme catalyses 5-O-(1-carboxyvinyl)-3-phosphoshikimate = chorismate + phosphate. Its pathway is metabolic intermediate biosynthesis; chorismate biosynthesis; chorismate from D-erythrose 4-phosphate and phosphoenolpyruvate: step 7/7. Its function is as follows. Catalyzes the anti-1,4-elimination of the C-3 phosphate and the C-6 proR hydrogen from 5-enolpyruvylshikimate-3-phosphate (EPSP) to yield chorismate, which is the branch point compound that serves as the starting substrate for the three terminal pathways of aromatic amino acid biosynthesis. This reaction introduces a second double bond into the aromatic ring system. The polypeptide is Chorismate synthase (Staphylococcus carnosus (strain TM300)).